We begin with the raw amino-acid sequence, 378 residues long: Signal peptide peptidase (378 aa).

Residues 1–27 (MDSAVSDPHNGSAEAGTPANGTTRPPS) are disordered. The Lumenal segment spans residues 1 to 31 (MDSAVSDPHNGSAEAGTPANGTTRPPSTPEG). N-linked (GlcNAc...) asparagine glycosylation is found at Asn-10 and Asn-20. The helical transmembrane segment at 32–52 (IALAYGSLLLMALLPIFFGAL) threads the bilayer. Residues 53–77 (RSVRCARGKSSSDMPETITSRDAAR) lie on the Cytoplasmic side of the membrane. The chain crosses the membrane as a helical span at residues 78 to 98 (FPIIASCTLLGLYLFFKIFSQ). Topologically, residues 99 to 100 (EY) are lumenal. A helical transmembrane segment spans residues 101–121 (INLLLSMYFFVLGILALSHTI). The Cytoplasmic segment spans residues 122-157 (SPFMNKFFPANFPNRQYQLLFTQGSGENKEEIINYE). Residues 158–178 (FDTKDLVCLGLSSVVGVWYLL) form a helical membrane-spanning segment. Over 179–181 (RKH) the chain is Lumenal. A helical transmembrane segment spans residues 182–202 (WIANNLFGLAFSLNGVELLHL). Topologically, residues 203 to 209 (NNVSTGC) are cytoplasmic. Residues 210–230 (ILLGGLFIYDIFWVFGTNVMV) form a helical membrane-spanning segment. Asp-219 is an active-site residue. Topologically, residues 231-256 (TVAKSFEAPIKLVFPQDLLEKGLEAD) are lumenal. The chain crosses the membrane as a helical span at residues 257–277 (NFAMLGLGDIVIPGIFIALLL). Asp-265 is a catalytic residue. The Cytoplasmic segment spans residues 278–290 (RFDISLKKNTHTY). The helical transmembrane segment at 291 to 311 (FYTSFAAYIFGLGLTIFIMHI) threads the bilayer. Residues 312 to 314 (FKH) are Lumenal-facing. A helical membrane pass occupies residues 315-335 (AQPALLYLVPACIGFPVLVAL). A PAL motif is present at residues 317–319 (PAL). At 336–378 (AKGEVAEMFSYEESNPKDPAAETESKEESTEASASKRLEKKEK) the chain is on the cytoplasmic side. Residues 346-378 (YEESNPKDPAAETESKEESTEASASKRLEKKEK) form a disordered region. The segment covering 349-378 (SNPKDPAAETESKEESTEASASKRLEKKEK) has biased composition (basic and acidic residues). A Phosphoserine modification is found at Ser-368.

The protein belongs to the peptidase A22B family. In terms of assembly, monomer. Homodimer. Interacts with RNF139. Interacts with DERL1 and XBP1 isoform 1. As to expression, widely expressed with highest levels in liver and kidney. In the brain, expressed predominantly in hippocampus, amygdala, piriform cortex, choroid plexus and arcuate nucleus of the hypothalamic area. Isoform 1 is more strongly expressed than isoform 4 in most tissues except brain and skeletal muscle where isoform 4 is the dominant isoform and in testis where isoform 1 and isoform 4 are expressed at similar levels. In the brain, isoform 4 is not detected in the choroid plexus.

It is found in the endoplasmic reticulum membrane. It localises to the membrane. The protein localises to the cell membrane. Its function is as follows. Catalyzes intramembrane proteolysis of signal peptides that have been removed from precursors of secretory and membrane proteins, resulting in the release of the fragment from the ER membrane into the cytoplasm. Required to generate lymphocyte cell surface (HLA-E) epitopes derived from MHC class I signal peptides. Involved in the intramembrane cleavage of the integral membrane protein PSEN1. Cleaves the integral membrane protein XBP1 isoform 1 in a DERL1/RNF139-dependent manner. May play a role in graft rejection. The protein is Signal peptide peptidase of Mus musculus (Mouse).